We begin with the raw amino-acid sequence, 363 residues long: Flagellar P-ring protein (363 aa).

An N-terminal signal peptide occupies residues 1–20; that stretch reads MKYKLVLAVAVLVFSLPSQA.

The protein belongs to the FlgI family. The basal body constitutes a major portion of the flagellar organelle and consists of four rings (L,P,S, and M) mounted on a central rod.

It localises to the periplasm. It is found in the bacterial flagellum basal body. Assembles around the rod to form the L-ring and probably protects the motor/basal body from shearing forces during rotation. This is Flagellar P-ring protein from Shewanella baltica (strain OS223).